The primary structure comprises 621 residues: MAKIIGIDLGTSNSAAAVMEGGKTTLIPSAEGTTLGGKAFPSYVAFTKDGQLLVGEPARRQAVTNPEGTINAFKRKMGTNYKYKVNGKEFTPQQLSAFILQKIKKDSEAYLGETITKAVITVPAYFNDDQRQATKDAGAIAGLEVVRLVNEPTAASLAYGIDKVGKEQKILVFDLGGGTLDVTIMEMGAEGTFEVLSTSGDTQLGGTDMDNALIDYIAEDFKKTNGIDLRNDKMAVQRLKEAAEKAKIELSNVLETDINLPFITADASGPKHLAMKFTRATLENLVRHIVERCKASIDQAVKDAKLTAETVTKIILVGGPTRMPIVQKFAEDHVGKKAERGIDPMECVCFGAAVQAAVLTGDVKDILLLDVTPLTLGLETMGGVRTSLIDRNTTVPAKRSQVFSTAADNQPSVEINVLQGERAMAKDNLSLGRFMLDGIPPAPRGVPQIEVTFDIDANGILHVSAKDKGTGKEQSIKISSSTKLSKDDIDKYVKEAEQYASEDVKRKEEIEVRNEADNLIYSVEKSLKDHGDKVSADERLIIEQSLTAAKDALKGSDVATIKSAKEALTTASHKLAEVVYKASQVQDTQGAAQGQSQGNPQQTADNRGKVVDAEIVDENKE.

Phosphothreonine; by autocatalysis is present on Thr179. The segment covering 583–605 (SQVQDTQGAAQGQSQGNPQQTAD) has biased composition (polar residues). The segment at 583-621 (SQVQDTQGAAQGQSQGNPQQTADNRGKVVDAEIVDENKE) is disordered. Residues 606–621 (NRGKVVDAEIVDENKE) show a composition bias toward basic and acidic residues.

This sequence belongs to the heat shock protein 70 family.

Acts as a chaperone. This is Chaperone protein DnaK from Endomicrobium trichonymphae.